Consider the following 123-residue polypeptide: Fluoride-specific ion channel FluC (123 aa).

4 consecutive transmembrane segments (helical) span residues 7-27 (VAIA…SGIL), 39-59 (LVNS…FWGI), 68-88 (FFGT…YETF), and 100-120 (ALNI…GFIL). 2 residues coordinate Na(+): Gly-75 and Ser-78.

It belongs to the fluoride channel Fluc/FEX (TC 1.A.43) family.

Its subcellular location is the cell membrane. The catalysed reaction is fluoride(in) = fluoride(out). Its activity is regulated as follows. Na(+) is not transported, but it plays an essential structural role and its presence is essential for fluoride channel function. In terms of biological role, fluoride-specific ion channel. Important for reducing fluoride concentration in the cell, thus reducing its toxicity. In Thermococcus onnurineus (strain NA1), this protein is Fluoride-specific ion channel FluC.